A 183-amino-acid polypeptide reads, in one-letter code: Ras-related protein Rap-2c (183 aa).

10-17 (GSGGVGKS) is a binding site for GTP. Positions 32–40 (YDPTIEDFY) match the Effector region motif. GTP contacts are provided by residues 57–61 (DTAGT) and 116–119 (NKVD). 2 S-palmitoyl cysteine lipidation sites follow: Cys-176 and Cys-177. Cys-180 carries the post-translational modification Cysteine methyl ester. Cys-180 carries the S-geranylgeranyl cysteine lipid modification. The propeptide at 181–183 (VVQ) is removed in mature form.

This sequence belongs to the small GTPase superfamily. Ras family. Palmitoylated. Palmitoylation is required for association with recycling endosome membranes and activation of TNIK.

It localises to the cytoplasm. Its subcellular location is the recycling endosome membrane. The catalysed reaction is GTP + H2O = GDP + phosphate + H(+). Its function is as follows. Small GTP-binding protein which cycles between a GDP-bound inactive and a GTP-bound active form. May play a role in cytoskeletal rearrangements and regulate cell spreading through activation of the effector TNIK. May play a role in SRE-mediated gene transcription. This is Ras-related protein Rap-2c (RAP2C) from Bos taurus (Bovine).